Here is a 39-residue protein sequence, read N- to C-terminus: LIM/homeobox protein xLIM-2B (39 aa).

The homeobox DNA-binding region spans 1–39 (KAKQLETLKAAFAATPKPTRHIREQLAQETGLNMRVIQV).

Its subcellular location is the nucleus. The polypeptide is LIM/homeobox protein xLIM-2B (lim2b) (Xenopus laevis (African clawed frog)).